Consider the following 264-residue polypeptide: Phosphatidylinositol transfer protein 1 (264 aa).

A disordered region spans residues 151-174; sequence NYKETEDPTKIRSEKANRGPLEEE. A coiled-coil region spans residues 238–264; sequence VRAFELKTKEDLKKKLEEKDENKAAEK.

Belongs to the PtdIns transfer protein family. PI transfer class I subfamily. In terms of processing, phosphorylated in response to activation of rasG.

The protein localises to the cytoplasm. The protein resides in the golgi apparatus. Its function is as follows. Catalyzes the transfer of PtdIns and phosphatidylcholine between membranes. The protein is Phosphatidylinositol transfer protein 1 (pitA) of Dictyostelium discoideum (Social amoeba).